Reading from the N-terminus, the 310-residue chain is E3 ubiquitin-protein ligase CSU1 (310 aa).

An RING-type 1; degenerate zinc finger spans residues C43–I67. Residues K75–E95 adopt a coiled-coil conformation. The segment at E110 to N138 is disordered. The span at N122–G133 shows a compositional bias: basic and acidic residues. The RING-type 2 zinc finger occupies C221 to D263.

This sequence belongs to the NOSIP family.

It localises to the nucleus. The protein resides in the nucleus speckle. The enzyme catalyses S-ubiquitinyl-[E2 ubiquitin-conjugating enzyme]-L-cysteine + [acceptor protein]-L-lysine = [E2 ubiquitin-conjugating enzyme]-L-cysteine + N(6)-ubiquitinyl-[acceptor protein]-L-lysine.. Its pathway is protein modification; protein ubiquitination. Functionally, RING-finger E3 ubiquitin-protein ligase that plays an major role in maintaining COP1 homeostasis in darkness. Negatively regulates COP1 protein accumulation by targeting COP1 for ubiquitination and subsequent proteasomal degradation in dark-grown seedlings. Negatively regulates the accumulation of SPA1 protein in the dark. This is E3 ubiquitin-protein ligase CSU1 from Arabidopsis thaliana (Mouse-ear cress).